Consider the following 725-residue polypeptide: D-(-)-3-hydroxybutyrate oligomer hydrolase (725 aa).

The N-terminal stretch at 1 to 22 (MNTTRDANRLRQRASLSGLALA) is a signal peptide. S322 functions as the Charge relay system in the catalytic mechanism.

Belongs to the D-(-)-3-hydroxybutyrate oligomer hydrolase family.

It is found in the secreted. It carries out the reaction (3R)-hydroxybutanoate dimer + H2O = 2 (R)-3-hydroxybutanoate + H(+). The protein operates within lipid metabolism; butanoate metabolism. Its function is as follows. Participates in the degradation of poly-3-hydroxybutyrate (PHB). It works downstream of poly(3-hydroxybutyrate) depolymerase, hydrolyzing D(-)-3-hydroxybutyrate oligomers of various length (3HB-oligomers) into 3HB-monomers. The chain is D-(-)-3-hydroxybutyrate oligomer hydrolase from Ralstonia nicotianae (strain ATCC BAA-1114 / GMI1000) (Ralstonia solanacearum).